Here is a 481-residue protein sequence, read N- to C-terminus: RAC-beta serine/threonine-protein kinase (481 aa).

The residue at position 1 (Met1) is an N-acetylmethionine. Positions 5 to 108 constitute a PH domain; sequence SVIKEGWLHK…WMRAIQMVAN (104 aa). Ser34 carries the post-translational modification Phosphoserine. Cys60 and Cys77 are disulfide-bonded. Ser126 bears the Phosphoserine mark. O-linked (GlcNAc) serine glycosylation is found at Ser128 and Ser131. The Protein kinase domain occupies 152–409; it reads FDYLKLLGKG…AKEVMEHRFF (258 aa). Residues 158-166 and Lys181 each bind ATP; that span reads LGKGTFGKV. Catalysis depends on Asp275, which acts as the Proton acceptor. Mn(2+) is bound by residues Asn280 and Asp293. Cys297 and Cys311 are oxidised to a cystine. The O-linked (GlcNAc) threonine glycan is linked to Thr306. The residue at position 309 (Thr309) is a Phosphothreonine; by PDPK1. An O-linked (GlcNAc) threonine glycan is attached at Thr313. Residues 410 to 481 enclose the AGC-kinase C-terminal domain; it reads LSINWQDVVQ…QFSYSASIRE (72 aa). Ser447 is subject to Phosphoserine. Thr451 carries the phosphothreonine modification. Ser474 and Ser478 each carry phosphoserine; by MTOR. O-linked (GlcNAc) serine; alternate glycosylation occurs at Ser474.

Belongs to the protein kinase superfamily. AGC Ser/Thr protein kinase family. RAC subfamily. In terms of assembly, interacts with BTBD10. Interacts with KCTD20. Interacts (via PH domain) with MTCP1, TCL1A and TCL1B; this interaction may facilitate AKT2 oligomerization and phosphorylation, hence increasing kinase activity. Interacts with PHB2; this interaction may be important for myogenic differentiation. Interacts (when phosphorylated) with CLIP3/ClipR-59; this interaction promotes cell membrane localization. Interacts with WDFY2 (via WD repeats 1-3). Post-translationally, phosphorylation on Thr-309 and Ser-474 is required for full activity. Phosphorylation of the activation loop at Thr-309 by PDPK1/PDK1 is a prerequisite for full activation. Phosphorylated and activated by PDPK1/PDK1 in the presence of phosphatidylinositol 3,4,5-trisphosphate. Phosphorylation by mTORC2 in response to growth factors plays a key role in AKT1 activation: mTORC2 phosphorylates different sites depending on the context, such as Ser-474 or Ser-478, thereby facilitating subsequent phosphorylation of the activation loop by PDPK1/PDK1. Ubiquitinated; undergoes both 'Lys-48'- and 'Lys-63'-linked polyubiquitination. TRAF6-induced 'Lys-63'-linked AKT2 ubiquitination. When fully phosphorylated and translocated into the nucleus, undergoes 'Lys-48'-polyubiquitination catalyzed by TTC3, leading to its degradation by the proteasome. In terms of processing, O-GlcNAcylation at Thr-306 and Thr-313 inhibits activating phosphorylation at Thr-309 via disrupting the interaction between AKT and PDPK1/PDK1.

The protein localises to the cytoplasm. Its subcellular location is the nucleus. The protein resides in the cell membrane. It is found in the early endosome. The enzyme catalyses L-seryl-[protein] + ATP = O-phospho-L-seryl-[protein] + ADP + H(+). The catalysed reaction is L-threonyl-[protein] + ATP = O-phospho-L-threonyl-[protein] + ADP + H(+). With respect to regulation, two specific sites, one in the kinase domain (Thr-309) and the other in the C-terminal regulatory region (Ser-474), need to be phosphorylated for its full activation. AKT2 phosphorylation of PKP1 is induced by insulin. Inhibited by Akt inhibitor MK2206. Its function is as follows. AKT2 is one of 3 closely related serine/threonine-protein kinases (AKT1, AKT2 and AKT3) called the AKT kinases, and which regulate many processes including metabolism, proliferation, cell survival, growth and angiogenesis. This is mediated through serine and/or threonine phosphorylation of a range of downstream substrates. Over 100 substrate candidates have been reported so far, but for most of them, no isoform specificity has been reported. AKT is responsible of the regulation of glucose uptake by mediating insulin-induced translocation of the SLC2A4/GLUT4 glucose transporter to the cell surface. Phosphorylation of PTPN1 at 'Ser-50' negatively modulates its phosphatase activity preventing dephosphorylation of the insulin receptor and the attenuation of insulin signaling. Phosphorylation of TBC1D4 triggers the binding of this effector to inhibitory 14-3-3 proteins, which is required for insulin-stimulated glucose transport. AKT also regulates the storage of glucose in the form of glycogen by phosphorylating GSK3A at 'Ser-21' and GSK3B at 'Ser-9', resulting in inhibition of its kinase activity. Phosphorylation of GSK3 isoforms by AKT is also thought to be one mechanism by which cell proliferation is driven. AKT also regulates cell survival via the phosphorylation of MAP3K5 (apoptosis signal-related kinase). Phosphorylation of 'Ser-83' decreases MAP3K5 kinase activity stimulated by oxidative stress and thereby prevents apoptosis. AKT mediates insulin-stimulated protein synthesis by phosphorylating TSC2 at 'Ser-939' and 'Thr-1462', thereby activating mTORC1 signaling and leading to both phosphorylation of 4E-BP1 and in activation of RPS6KB1. AKT is involved in the phosphorylation of members of the FOXO factors (Forkhead family of transcription factors), leading to binding of 14-3-3 proteins and cytoplasmic localization. In particular, FOXO1 is phosphorylated at 'Thr-24', 'Ser-256' and 'Ser-319'. FOXO3 and FOXO4 are phosphorylated on equivalent sites. AKT has an important role in the regulation of NF-kappa-B-dependent gene transcription and positively regulates the activity of CREB1 (cyclic AMP (cAMP)-response element binding protein). The phosphorylation of CREB1 induces the binding of accessory proteins that are necessary for the transcription of pro-survival genes such as BCL2 and MCL1. AKT phosphorylates 'Ser-454' on ATP citrate lyase (ACLY), thereby potentially regulating ACLY activity and fatty acid synthesis. Activates the 3B isoform of cyclic nucleotide phosphodiesterase (PDE3B) via phosphorylation of 'Ser-273', resulting in reduced cyclic AMP levels and inhibition of lipolysis. Phosphorylates PIKFYVE on 'Ser-318', which results in increased PI(3)P-5 activity. The Rho GTPase-activating protein DLC1 is another substrate and its phosphorylation is implicated in the regulation cell proliferation and cell growth. AKT plays a role as key modulator of the AKT-mTOR signaling pathway controlling the tempo of the process of newborn neurons integration during adult neurogenesis, including correct neuron positioning, dendritic development and synapse formation. Signals downstream of phosphatidylinositol 3-kinase (PI(3)K) to mediate the effects of various growth factors such as platelet-derived growth factor (PDGF), epidermal growth factor (EGF), insulin and insulin-like growth factor I (IGF-I). AKT mediates the antiapoptotic effects of IGF-I. Essential for the SPATA13-mediated regulation of cell migration and adhesion assembly and disassembly. May be involved in the regulation of the placental development. In response to lysophosphatidic acid stimulation, inhibits the ciliogenesis cascade. In this context, phosphorylates WDR44, hence stabilizing its interaction with Rab11 and preventing the formation of the ciliogenic Rab11-FIP3-RAB3IP complex. Also phosphorylates RAB3IP/Rabin8, thus may affect RAB3IP guanine nucleotide exchange factor (GEF) activity toward Rab8, which is important for cilia growth. Phosphorylates PKP1, facilitating its interaction with YWHAG and translocation to the nucleus, ultimately resulting in a reduction in keratinocyte intercellular adhesion. Phosphorylation of PKP1 increases PKP1 protein stability, translocation to the cytoplasm away from desmosome plaques and PKP1-driven cap-dependent translation. Several AKT2-specific substrates have been identified, including ANKRD2, C2CD5, CLK2 and PITX2. May play a role in myoblast differentiation. In this context, may act through PITX2 phosphorylation. Unphosphorylated PITX2 associates with an ELAVL1/HuR-containing complex, which stabilizes cyclin mRNA and ensuring cell proliferation. Phosphorylation by AKT2 impairs this association, leading to CCND1 mRNA destabilization and progression towards differentiation. Also involved in the negative regulation of myogenesis in response to stress conditions. In this context, acts by phosphorylating ANKRD2. May also be a key regulator of glucose uptake. Regulates insulin-stimulated glucose transport by the increase of glucose transporter GLUT4 translocation from intracellular stores to the plasma membrane. In this context, acts by phosphorylating C2CD5/CDP138 on 'Ser-197' in insulin-stimulated adipocytes. Through the phosphorylation of CLK2 on 'Thr-343', involved in insulin-regulated suppression of hepatic gluconeogenesis. The chain is RAC-beta serine/threonine-protein kinase (Akt2) from Mus musculus (Mouse).